The chain runs to 178 residues: Signal peptidase complex subunit 2 (178 aa).

The Cytoplasmic portion of the chain corresponds to M1–A37. The chain crosses the membrane as a helical span at residues L38–F58. The Lumenal portion of the chain corresponds to L59–Q67. Residues I68–Y88 traverse the membrane as a helical segment. Residues F89–E178 lie on the Cytoplasmic side of the membrane.

It belongs to the SPCS2 family. In terms of assembly, component of the signal peptidase complex (SPC) composed of a catalytic subunit SEC11 and three accessory subunits SPC1, SPC2 and SPC3. The complex induces a local thinning of the ER membrane which is used to measure the length of the signal peptide (SP) h-region of protein substrates. This ensures the selectivity of the complex towards h-regions shorter than 18-20 amino acids. SPC associates with the translocon complex. Interacts with SBH1 and SEB2/SBH2.

The protein resides in the endoplasmic reticulum membrane. Its function is as follows. Component of the signal peptidase complex (SPC) which catalyzes the cleavage of N-terminal signal sequences from nascent proteins as they are translocated into the lumen of the endoplasmic reticulum. Enhances the enzymatic activity of SPC and facilitates the interactions between different components of the translocation site. This chain is Signal peptidase complex subunit 2 (SPC2), found in Saccharomyces cerevisiae (strain ATCC 204508 / S288c) (Baker's yeast).